The following is a 239-amino-acid chain: Fatty acid metabolism regulator protein (239 aa).

The region spanning 6-74 is the HTH gntR-type domain; the sequence is QSPAGFAEEY…HGKPTKVNNF (69 aa). Residues 34 to 53 constitute a DNA-binding region (H-T-H motif); sequence ERELSELIGVTRTTLREVLQ.

As to quaternary structure, homodimer.

It is found in the cytoplasm. Multifunctional regulator of fatty acid metabolism. The chain is Fatty acid metabolism regulator protein from Shigella flexneri.